We begin with the raw amino-acid sequence, 427 residues long: Glutamate-1-semialdehyde 2,1-aminomutase (427 aa).

Lysine 265 is subject to N6-(pyridoxal phosphate)lysine.

It belongs to the class-III pyridoxal-phosphate-dependent aminotransferase family. HemL subfamily. In terms of assembly, homodimer. Pyridoxal 5'-phosphate is required as a cofactor.

The protein resides in the cytoplasm. It carries out the reaction (S)-4-amino-5-oxopentanoate = 5-aminolevulinate. It participates in porphyrin-containing compound metabolism; protoporphyrin-IX biosynthesis; 5-aminolevulinate from L-glutamyl-tRNA(Glu): step 2/2. This Burkholderia cenocepacia (strain HI2424) protein is Glutamate-1-semialdehyde 2,1-aminomutase.